A 581-amino-acid chain; its full sequence is Leucine aminopeptidase 3, chloroplastic (581 aa).

A chloroplast-targeting transit peptide spans 1 to 50 (MAVTLVTSCASSSRFHFRSFSSSPSSLSSCFVRFQLLSRLRVSFAITPLY). Mn(2+)-binding residues include Lys350 and Asp355. Lys362 is an active-site residue. Asp375, Asp435, and Glu437 together coordinate Mn(2+). Arg439 is a catalytic residue.

The protein belongs to the peptidase M17 family. Homohexamer (dimer of homotrimers). It depends on Mn(2+) as a cofactor.

The protein localises to the plastid. Its subcellular location is the chloroplast. The catalysed reaction is Release of an N-terminal amino acid, Xaa-|-Yaa-, in which Xaa is preferably Leu, but may be other amino acids including Pro although not Arg or Lys, and Yaa may be Pro. Amino acid amides and methyl esters are also readily hydrolyzed, but rates on arylamides are exceedingly low.. It catalyses the reaction Release of N-terminal proline from a peptide.. Functionally, presumably involved in the processing and regular turnover of intracellular proteins. Catalyzes the removal of unsubstituted N-terminal amino acids from various peptides. Possesses Cys-Gly dipeptidase activity. The polypeptide is Leucine aminopeptidase 3, chloroplastic (Arabidopsis thaliana (Mouse-ear cress)).